The chain runs to 428 residues: Stabilizer of axonemal microtubules 4 (428 aa).

Positions 201-231 are disordered; sequence AKEETGFTEESNKNPIVFQPPSQALPGDPVL.

In terms of assembly, microtubule inner protein component of sperm flagellar doublet microtubules. Interacts with PPP1CA.

The protein resides in the cell projection. Its subcellular location is the cilium. It is found in the cytoplasm. The protein localises to the cytoskeleton. It localises to the flagellum axoneme. This Bos taurus (Bovine) protein is Stabilizer of axonemal microtubules 4.